A 354-amino-acid polypeptide reads, in one-letter code: Uroporphyrinogen decarboxylase (354 aa).

Residues 25–29 (RQAGR), F44, D75, Y152, T207, and H330 each bind substrate.

Belongs to the uroporphyrinogen decarboxylase family. In terms of assembly, homodimer.

Its subcellular location is the cytoplasm. The catalysed reaction is uroporphyrinogen III + 4 H(+) = coproporphyrinogen III + 4 CO2. Its pathway is porphyrin-containing compound metabolism; protoporphyrin-IX biosynthesis; coproporphyrinogen-III from 5-aminolevulinate: step 4/4. Functionally, catalyzes the decarboxylation of four acetate groups of uroporphyrinogen-III to yield coproporphyrinogen-III. This Xylella fastidiosa (strain Temecula1 / ATCC 700964) protein is Uroporphyrinogen decarboxylase.